The chain runs to 330 residues: D-alanine--D-alanine ligase (330 aa).

Residues 120–326 (KLWLSALDIP…FKQFLEGIIR (207 aa)) form the ATP-grasp domain. Residue 150–205 (AFRNWGAVFVKAASQGSSVGCYKVTDAAKLSEAVNAAFGYSDQVLVEKAVRPRELE) coordinates ATP. Asp280, Glu293, and Asn295 together coordinate Mg(2+).

Belongs to the D-alanine--D-alanine ligase family. Mg(2+) serves as cofactor. The cofactor is Mn(2+).

Its subcellular location is the cytoplasm. The enzyme catalyses 2 D-alanine + ATP = D-alanyl-D-alanine + ADP + phosphate + H(+). Its pathway is cell wall biogenesis; peptidoglycan biosynthesis. In terms of biological role, cell wall formation. This chain is D-alanine--D-alanine ligase, found in Tolumonas auensis (strain DSM 9187 / NBRC 110442 / TA 4).